We begin with the raw amino-acid sequence, 436 residues long: Glucose-1-phosphate adenylyltransferase (436 aa).

Alpha-D-glucose 1-phosphate-binding positions include Tyr112, Gly178, 193–194, and Ser211; that span reads EK.

This sequence belongs to the bacterial/plant glucose-1-phosphate adenylyltransferase family. Homotetramer.

The enzyme catalyses alpha-D-glucose 1-phosphate + ATP + H(+) = ADP-alpha-D-glucose + diphosphate. The protein operates within glycan biosynthesis; glycogen biosynthesis. Its function is as follows. Involved in the biosynthesis of ADP-glucose, a building block required for the elongation reactions to produce glycogen. Catalyzes the reaction between ATP and alpha-D-glucose 1-phosphate (G1P) to produce pyrophosphate and ADP-Glc. This Histophilus somni (strain 129Pt) (Haemophilus somnus) protein is Glucose-1-phosphate adenylyltransferase.